Consider the following 1045-residue polypeptide: Probable sucrose-phosphate synthase (1045 aa).

2 stretches are compositionally biased toward basic and acidic residues: residues 93–115 and 124–137; these read ENEEAQRKTKRRMELERGRREAT and EGEKDISAHGDSTR. Disordered stretches follow at residues 93-141, 222-243, and 662-692; these read ENEE…PRLP, WSYGEPTEMLNPRDSNGFDDDD, and IASSRQRQPQWQRSSDEGLDNQEPESPSDSL. The span at 664-674 shows a compositional bias: low complexity; it reads SSRQRQPQWQR.

It belongs to the glycosyltransferase 1 family. Homodimer or homotetramer. Predominantly active in tap root.

The catalysed reaction is beta-D-fructose 6-phosphate + UDP-alpha-D-glucose = sucrose 6(F)-phosphate + UDP + H(+). Its pathway is glycan biosynthesis; sucrose biosynthesis; sucrose from D-fructose 6-phosphate and UDP-alpha-D-glucose: step 1/2. Activity is regulated by phosphorylation and moderated by concentration of metabolites and light. Functionally, plays a role in photosynthetic sucrose synthesis by catalyzing the rate-limiting step of sucrose biosynthesis from UDP-glucose and fructose- 6-phosphate. Involved in the regulation of carbon partitioning in the leaves of plants. May regulate the synthesis of sucrose and therefore play a major role as a limiting factor in the export of photoassimilates out of the leaf. Plays a role for sucrose availability that is essential for plant growth and fiber elongation. In Beta vulgaris (Sugar beet), this protein is Probable sucrose-phosphate synthase (SPS).